The sequence spans 1479 residues: Type VII secretion system protein EssC (1479 aa).

The interval 1 to 189 (MHKLIIKYNK…ASSLIRLTQE (189 aa)) is required for substrate secretion, protein missing this segment is unstable. Over 1–229 (MHKLIIKYNK…RPPQPIQKNN (229 aa)) the chain is Cytoplasmic. A helical transmembrane segment spans residues 230 to 252 (TVIWRSIIPPLVMIALTVVIFLV). Topologically, residues 253–256 (RPIG) are extracellular. Residues 257–279 (IYILMMIGMSTVTIVFGITTYFS) traverse the membrane as a helical segment. At 280–1479 (EKKKYNKDVE…QAYQKIRWFK (1200 aa)) the chain is on the cytoplasmic side. FtsK domains are found at residues 652 to 846 (DDIL…QDSN) and 997 to 1183 (QGPM…SEVS). Residues 672–679 (GTTGSGKS) and 1014–1021 (GSPGYGRT) each bind ATP. Positions 1249-1479 (MMPDEIKYED…QAYQKIRWFK (231 aa)) are required for substrate secretion, truncated protein is stable.

The protein belongs to the EssC family. Homooligomer. Interacts with EsaE.

It is found in the cell membrane. Functionally, component of the type VII secretion system (Ess). Required for the secretion of substrates including EsxA and EsxB. However, unable to support secretion of the substrate protein EsxC. The protein is Type VII secretion system protein EssC of Staphylococcus aureus (strain NCTC 8325 / PS 47).